A 155-amino-acid polypeptide reads, in one-letter code: Deoxyuridine 5'-triphosphate nucleotidohydrolase (155 aa).

Residues 74-76, N87, and 91-93 each bind substrate; these read RSG and LID.

This sequence belongs to the dUTPase family. Mg(2+) serves as cofactor.

It catalyses the reaction dUTP + H2O = dUMP + diphosphate + H(+). The protein operates within pyrimidine metabolism; dUMP biosynthesis; dUMP from dCTP (dUTP route): step 2/2. Its function is as follows. This enzyme is involved in nucleotide metabolism: it produces dUMP, the immediate precursor of thymidine nucleotides and it decreases the intracellular concentration of dUTP so that uracil cannot be incorporated into DNA. This chain is Deoxyuridine 5'-triphosphate nucleotidohydrolase, found in Xylella fastidiosa (strain M12).